Reading from the N-terminus, the 346-residue chain is Ion-translocating oxidoreductase complex subunit D (346 aa).

4 helical membrane-spanning segments follow: residues 20-40 (IMIQ…TFFG), 42-62 (GIII…GVVL), 69-91 (LASR…SLPP), and 120-140 (PFNP…VQMT). Thr187 bears the FMN phosphoryl threonine mark. The next 5 helical transmembrane spans lie at 212 to 232 (ASAG…YLIW), 242 to 262 (LSLL…APVV), 264 to 284 (APPL…FIAT), 290 to 310 (AATV…VWLI), and 314 to 334 (GGYP…VPLI).

The protein belongs to the NqrB/RnfD family. The complex is composed of six subunits: RnfA, RnfB, RnfC, RnfD, RnfE and RnfG. The cofactor is FMN.

It is found in the cell inner membrane. Part of a membrane-bound complex that couples electron transfer with translocation of ions across the membrane. This chain is Ion-translocating oxidoreductase complex subunit D, found in Sodalis glossinidius (strain morsitans).